We begin with the raw amino-acid sequence, 373 residues long: Polygalacturonase (373 aa).

The first 24 residues, 1 to 24, serve as a signal peptide directing secretion; that stretch reads MVRNIVSRLCSQLFALPSSSLQER. A disulfide bridge links Cys27 with Cys42. 2 N-linked (GlcNAc...) asparagine glycosylation sites follow: Asn65 and Asn94. 8 PbH1 repeats span residues 136–158, 159–197, 198–219, 220–240, 249–270, 278–300, 312–333, and 345–369; these read TGNSKITNLNIQNWPVHCFDITG, SSQLTISGLILDNRAGDKPNAKSGSLPAAHNTDGFDISS, SDHVTLDNNHVYNQDDCVAVTS, GTNIVVSNMYCSGGHGLSIGS, VDGVQFLSSQVVNSQNGCRIKS, INNVTYQNIALTNISTYGVDVQQ, TNGVKISNIKFIKVTGTVASSA, and CSGFTFSGNAITGGGKTSSCNYPTN. The active-site Proton donor is Asp212. Cysteines 214 and 230 form a disulfide. The active site involves His234. N-linked (GlcNAc...) asparagine glycosylation is found at Asn280 and Asn290. 2 disulfide bridges follow: Cys340–Cys345 and Cys364–Cys371.

It belongs to the glycosyl hydrolase 28 family.

It localises to the secreted. It catalyses the reaction (1,4-alpha-D-galacturonosyl)n+m + H2O = (1,4-alpha-D-galacturonosyl)n + (1,4-alpha-D-galacturonosyl)m.. Involved in maceration and soft-rotting of plant tissue. Hydrolyzes the 1,4-alpha glycosidic bonds of de-esterified pectate in the smooth region of the plant cell wall. This is Polygalacturonase (PGA) from Fusarium fujikuroi (Bakanae and foot rot disease fungus).